We begin with the raw amino-acid sequence, 336 residues long: N6-methyladenosine RNA methyltransferase MTA1 (336 aa).

The interval 61 to 83 (LISSEPPHLPFKTPEPKAGSGGL) is disordered.

It belongs to the MT-A70-like family.

It catalyses the reaction an adenosine in mRNA + S-adenosyl-L-methionine = an N(6)-methyladenosine in mRNA + S-adenosyl-L-homocysteine + H(+). N6-methyladenosine RNA methyltransferase that plays a crucial role in fungal phenotypic traits, virulence, and stress tolerance. Mediates the methylation of mRNAs to produce N6-methyladenosine (m6A)-containing mRNAs. M6A is a modification present at internal sites of mRNAs and some non-coding RNAs and plays a role in mRNA stability and processing. Mediates specifically acid phosphatase APHA mRNA stability through a YTHDF1-dependent m6A modification of the A1306, A1341, and A1666 key methylation modification sites. Also mediates the stability of the transcription factor ZAP1 mRNA via modification of residue A1935 localized in the 3'UTR. The polypeptide is N6-methyladenosine RNA methyltransferase MTA1 (Cryphonectria parasitica (strain ATCC 38755 / EP155)).